The sequence spans 184 residues: Protein GrpE (184 aa).

The protein belongs to the GrpE family. As to quaternary structure, homodimer.

The protein resides in the cytoplasm. Its function is as follows. Participates actively in the response to hyperosmotic and heat shock by preventing the aggregation of stress-denatured proteins, in association with DnaK and GrpE. It is the nucleotide exchange factor for DnaK and may function as a thermosensor. Unfolded proteins bind initially to DnaJ; upon interaction with the DnaJ-bound protein, DnaK hydrolyzes its bound ATP, resulting in the formation of a stable complex. GrpE releases ADP from DnaK; ATP binding to DnaK triggers the release of the substrate protein, thus completing the reaction cycle. Several rounds of ATP-dependent interactions between DnaJ, DnaK and GrpE are required for fully efficient folding. This Pseudomonas putida (strain GB-1) protein is Protein GrpE.